The following is a 425-amino-acid chain: Glutamyl-tRNA reductase (425 aa).

Substrate-binding positions include threonine 49–arginine 52, serine 109, glutamate 114–glutamine 116, and glutamine 120. The active-site Nucleophile is cysteine 50. NADP(+) is bound at residue glycine 189–glycine 194.

The protein belongs to the glutamyl-tRNA reductase family. Homodimer.

It carries out the reaction (S)-4-amino-5-oxopentanoate + tRNA(Glu) + NADP(+) = L-glutamyl-tRNA(Glu) + NADPH + H(+). It participates in porphyrin-containing compound metabolism; protoporphyrin-IX biosynthesis; 5-aminolevulinate from L-glutamyl-tRNA(Glu): step 1/2. The protein operates within porphyrin-containing compound metabolism; chlorophyll biosynthesis. Catalyzes the NADPH-dependent reduction of glutamyl-tRNA(Glu) to glutamate 1-semialdehyde (GSA). The protein is Glutamyl-tRNA reductase of Chlorobium luteolum (strain DSM 273 / BCRC 81028 / 2530) (Pelodictyon luteolum).